A 335-amino-acid polypeptide reads, in one-letter code: Beta-ketoacyl-[acyl-carrier-protein] synthase III (335 aa).

Residues C119 and H261 contribute to the active site. The interval 262 to 266 (QANQR) is ACP-binding. Residue N291 is part of the active site.

The protein belongs to the thiolase-like superfamily. FabH family. In terms of assembly, homodimer.

The protein resides in the cytoplasm. It carries out the reaction malonyl-[ACP] + acetyl-CoA + H(+) = 3-oxobutanoyl-[ACP] + CO2 + CoA. It participates in lipid metabolism; fatty acid biosynthesis. Catalyzes the condensation reaction of fatty acid synthesis by the addition to an acyl acceptor of two carbons from malonyl-ACP. Catalyzes the first condensation reaction which initiates fatty acid synthesis and may therefore play a role in governing the total rate of fatty acid production. Possesses both acetoacetyl-ACP synthase and acetyl transacylase activities. Its substrate specificity determines the biosynthesis of branched-chain and/or straight-chain of fatty acids. This chain is Beta-ketoacyl-[acyl-carrier-protein] synthase III, found in Prochlorococcus marinus (strain MIT 9215).